Consider the following 300-residue polypeptide: Cysteine-rich venom protein (300 aa).

The first 21 residues, 1-21, serve as a signal peptide directing secretion; that stretch reads MLSTMQTVGAVLMLSIVLVAG. A propeptide spanning residues 22–24 is cleaved from the precursor; it reads RKR. In terms of domain architecture, SCP spans 62-183; the sequence is LEMHNKIRAD…GNNKYFVCNY (122 aa).

Contains 11 disulfide bonds. As to expression, expressed by the venom duct.

It is found in the secreted. Functionally, protease responsible for cleaving the conotoxins from their propeptide precursors. The target propeptide requires minimum four residues including a leucine N-terminal of the cleavage site for efficient substrate processing (example: Xaa-Xaa-Xaa-Leu-Asn-Lys-Arg-toxin). The sequence is that of Cysteine-rich venom protein from Conus textile (Cloth-of-gold cone).